The sequence spans 323 residues: tRNA dimethylallyltransferase (323 aa).

An ATP-binding site is contributed by 32–39 (GPTASGKS). Residue 34–39 (TASGKS) participates in substrate binding. The segment at 57–60 (DSMQ) is interaction with substrate tRNA.

Belongs to the IPP transferase family. Monomer. Mg(2+) serves as cofactor.

The catalysed reaction is adenosine(37) in tRNA + dimethylallyl diphosphate = N(6)-dimethylallyladenosine(37) in tRNA + diphosphate. Its function is as follows. Catalyzes the transfer of a dimethylallyl group onto the adenine at position 37 in tRNAs that read codons beginning with uridine, leading to the formation of N6-(dimethylallyl)adenosine (i(6)A). This chain is tRNA dimethylallyltransferase, found in Rhodopseudomonas palustris (strain BisB5).